We begin with the raw amino-acid sequence, 245 residues long: Probable ABC transporter ATP-binding protein p29 (245 aa).

The 239-residue stretch at 7 to 245 (LSFEKVSIIY…KEQLYKIYDN (239 aa)) folds into the ABC transporter domain. 39-46 (GKSGVGKS) contributes to the ATP binding site.

It belongs to the ABC transporter superfamily.

Its function is as follows. Part of a high-affinity transport system. The polypeptide is Probable ABC transporter ATP-binding protein p29 (p29) (Mycoplasma genitalium (strain ATCC 33530 / DSM 19775 / NCTC 10195 / G37) (Mycoplasmoides genitalium)).